The chain runs to 271 residues: Imidazole glycerol phosphate synthase subunit HisF (271 aa).

Residues Asp-12 and Asp-136 contribute to the active site.

The protein belongs to the HisA/HisF family. In terms of assembly, heterodimer of HisH and HisF.

The protein localises to the cytoplasm. The catalysed reaction is 5-[(5-phospho-1-deoxy-D-ribulos-1-ylimino)methylamino]-1-(5-phospho-beta-D-ribosyl)imidazole-4-carboxamide + L-glutamine = D-erythro-1-(imidazol-4-yl)glycerol 3-phosphate + 5-amino-1-(5-phospho-beta-D-ribosyl)imidazole-4-carboxamide + L-glutamate + H(+). Its pathway is amino-acid biosynthesis; L-histidine biosynthesis; L-histidine from 5-phospho-alpha-D-ribose 1-diphosphate: step 5/9. IGPS catalyzes the conversion of PRFAR and glutamine to IGP, AICAR and glutamate. The HisF subunit catalyzes the cyclization activity that produces IGP and AICAR from PRFAR using the ammonia provided by the HisH subunit. The protein is Imidazole glycerol phosphate synthase subunit HisF of Haloarcula marismortui (strain ATCC 43049 / DSM 3752 / JCM 8966 / VKM B-1809) (Halobacterium marismortui).